The following is a 447-amino-acid chain: Ribosomal protein uS12 methylthiotransferase RimO (447 aa).

The MTTase N-terminal domain occupies 10 to 120; it reads PKVGFVSLGC…VVNAVHDVVP (111 aa). Residues C19, C55, C84, C153, C157, and C160 each contribute to the [4Fe-4S] cluster site. One can recognise a Radical SAM core domain in the interval 139 to 377; the sequence is LTPRHYAYLK…MAHQQAISAA (239 aa). The TRAM domain occupies 380–447; the sequence is QMKIGKEIEV…DEYDLWAEML (68 aa).

The protein belongs to the methylthiotransferase family. RimO subfamily. The cofactor is [4Fe-4S] cluster.

It localises to the cytoplasm. The catalysed reaction is L-aspartate(89)-[ribosomal protein uS12]-hydrogen + (sulfur carrier)-SH + AH2 + 2 S-adenosyl-L-methionine = 3-methylsulfanyl-L-aspartate(89)-[ribosomal protein uS12]-hydrogen + (sulfur carrier)-H + 5'-deoxyadenosine + L-methionine + A + S-adenosyl-L-homocysteine + 2 H(+). In terms of biological role, catalyzes the methylthiolation of an aspartic acid residue of ribosomal protein uS12. This chain is Ribosomal protein uS12 methylthiotransferase RimO, found in Pseudomonas syringae pv. syringae (strain B728a).